The chain runs to 482 residues: tRNA sulfurtransferase (482 aa).

The THUMP domain maps to 61 to 165 (LAIRDALTRI…DDRLLLIKGR (105 aa)). Residues 183-184 (LI), lysine 265, glycine 287, and glutamine 296 contribute to the ATP site. Cysteine 344 and cysteine 456 are oxidised to a cystine. The Rhodanese domain maps to 404-482 (FGPNDVILDI…GFNNVKVYRL (79 aa)). Residue cysteine 456 is the Cysteine persulfide intermediate of the active site.

This sequence belongs to the ThiI family.

It localises to the cytoplasm. The enzyme catalyses [ThiI sulfur-carrier protein]-S-sulfanyl-L-cysteine + a uridine in tRNA + 2 reduced [2Fe-2S]-[ferredoxin] + ATP + H(+) = [ThiI sulfur-carrier protein]-L-cysteine + a 4-thiouridine in tRNA + 2 oxidized [2Fe-2S]-[ferredoxin] + AMP + diphosphate. It catalyses the reaction [ThiS sulfur-carrier protein]-C-terminal Gly-Gly-AMP + S-sulfanyl-L-cysteinyl-[cysteine desulfurase] + AH2 = [ThiS sulfur-carrier protein]-C-terminal-Gly-aminoethanethioate + L-cysteinyl-[cysteine desulfurase] + A + AMP + 2 H(+). It participates in cofactor biosynthesis; thiamine diphosphate biosynthesis. Its function is as follows. Catalyzes the ATP-dependent transfer of a sulfur to tRNA to produce 4-thiouridine in position 8 of tRNAs, which functions as a near-UV photosensor. Also catalyzes the transfer of sulfur to the sulfur carrier protein ThiS, forming ThiS-thiocarboxylate. This is a step in the synthesis of thiazole, in the thiamine biosynthesis pathway. The sulfur is donated as persulfide by IscS. The polypeptide is tRNA sulfurtransferase (Shigella boydii serotype 18 (strain CDC 3083-94 / BS512)).